A 376-amino-acid chain; its full sequence is MANQKDTAETLARTPLYQLGVELKARLTSFGGWEMPVQFSGITREHEAVRNAAGMFDISHMGKFTLQGKNLISQLQGLVPSDLSRLQPGQAQYTVLLNPQGGIIDDIIVYYQGEDNTGTQQAFIIVNAATTSKDKAWILSHLDQNQVQFQDISPAKVLIAIQGPKAIGYLQPFVQQNLQPIKAFGHLEATVLGQAGFIARTGYTGEDGFEILVDPEVGVELWRSLYDAGVIPCGLGARDTLRLEAAMALYGQDIDDNTTPLEAGLGWLVHLDTKGDFIGRSVLEQQKATGVQRRLIGLQTQGRNIARHGYQVLSDGKVVGGVTSGTLSPTLGYPVALAYVPSKLAKVGQPLEVEIRGKAYPAVVVKRPFYRSSNKG.

Belongs to the GcvT family. The glycine cleavage system is composed of four proteins: P, T, L and H.

It carries out the reaction N(6)-[(R)-S(8)-aminomethyldihydrolipoyl]-L-lysyl-[protein] + (6S)-5,6,7,8-tetrahydrofolate = N(6)-[(R)-dihydrolipoyl]-L-lysyl-[protein] + (6R)-5,10-methylene-5,6,7,8-tetrahydrofolate + NH4(+). Its function is as follows. The glycine cleavage system catalyzes the degradation of glycine. The protein is Aminomethyltransferase of Nostoc sp. (strain PCC 7120 / SAG 25.82 / UTEX 2576).